The following is a 455-amino-acid chain: MSFTIAIIGRPNVGKSTLFNRLVGQKLALVDDEPGVTRDRREGQARLGDLDFTVIDTAGLDEGPRGSLTARMQEQTEAAIAAADALMFVFDARAGLTPTDRSFADFARRADKPVVLVANKSEGRHGDAGALESYALGLGDPVGVSAEHDEGMSDLYDALRSVMPEPAEEVDEEEIVEPDMSRPIRVAIVGRPNAGKSTVINYLLSEERLLTSPEAGTTRDSISVELNWKGRDFRIFDTAGLRRRSRIEAKLEKLSVADTLRAVRFAEAVVLMMDAQNRFEEQDLRIADLIEREGRALVIAVNKWDLMKGGSARIASLRNDVDHWLPQIRGAPVVAISGLTGEGIDRLMIAIQTAYAVWNRRVATALLNRWFQQAVAASPPPAVSGRRLKLNYATQTKARPPSFVVFCSRADAVPESYLRYLVNSLRETFDLAGTPIRITLREKANPFAHKRKRKS.

EngA-type G domains are found at residues 3–167 (FTIA…PEPA) and 184–359 (IRVA…AVWN). GTP contacts are provided by residues 9-16 (GRPNVGKS), 56-60 (DTAGL), 119-122 (NKSE), 190-197 (GRPNAGKS), 237-241 (DTAGL), and 302-305 (NKWD). Residues 360–444 (RRVATALLNR…PIRITLREKA (85 aa)) form the KH-like domain.

The protein belongs to the TRAFAC class TrmE-Era-EngA-EngB-Septin-like GTPase superfamily. EngA (Der) GTPase family. As to quaternary structure, associates with the 50S ribosomal subunit.

GTPase that plays an essential role in the late steps of ribosome biogenesis. The sequence is that of GTPase Der from Nitrobacter winogradskyi (strain ATCC 25391 / DSM 10237 / CIP 104748 / NCIMB 11846 / Nb-255).